A 155-amino-acid chain; its full sequence is HTH-type transcriptional repressor MdtR (155 aa).

Residues 4 to 140 (ADQLMSDIQL…AAHITAKLAQ (137 aa)) enclose the HTH marR-type domain. Residues 54-77 (VSEIAERMEVKPSAVTLMADRLEQ) constitute a DNA-binding region (H-T-H motif).

Homodimer.

The protein resides in the cytoplasm. The binding of MdtR to the mdtRP promoter region is severely inhibited by adding excess concentrations of fusidic acid or novobiocin but not by actinomycin or streptomycin. Functionally, repressor of the multidrug resistance operon mdtRP. Acts by binding directly to the mdtRP promoter region, leading to the repression of its expression. This Bacillus subtilis (strain 168) protein is HTH-type transcriptional repressor MdtR.